Here is a 425-residue protein sequence, read N- to C-terminus: Adenylosuccinate synthetase (425 aa).

GTP is bound by residues 12 to 18 (GDEGKGK) and 40 to 42 (GHT). The Proton acceptor role is filled by aspartate 13. Mg(2+) is bound by residues aspartate 13 and glycine 40. Residues 13 to 16 (DEGK), 38 to 41 (NAGH), threonine 130, arginine 144, glutamine 225, threonine 240, and arginine 304 contribute to the IMP site. The active-site Proton donor is the histidine 41. 300–306 (ATTGRPR) contributes to the substrate binding site. GTP is bound by residues arginine 306, 332–334 (KLD), and 414–416 (SVG).

It belongs to the adenylosuccinate synthetase family. In terms of assembly, homodimer. It depends on Mg(2+) as a cofactor.

It is found in the cytoplasm. It carries out the reaction IMP + L-aspartate + GTP = N(6)-(1,2-dicarboxyethyl)-AMP + GDP + phosphate + 2 H(+). It participates in purine metabolism; AMP biosynthesis via de novo pathway; AMP from IMP: step 1/2. In terms of biological role, plays an important role in the de novo pathway of purine nucleotide biosynthesis. Catalyzes the first committed step in the biosynthesis of AMP from IMP. This is Adenylosuccinate synthetase from Desulfovibrio desulfuricans (strain ATCC 27774 / DSM 6949 / MB).